The primary structure comprises 346 residues: Putative [LysW]-L-2-aminoadipate/[LysW]-L-glutamate phosphate reductase (346 aa).

Position 12–15 (serine 12–threonine 15) interacts with NADP(+). The active site involves cysteine 147. The segment at glycine 178–valine 198 is disordered. Residue asparagine 310 participates in NADP(+) binding.

Belongs to the NAGSA dehydrogenase family. Type 1 subfamily. LysY sub-subfamily.

The protein resides in the cytoplasm. The enzyme catalyses [amino-group carrier protein]-C-terminal-N-(1-carboxy-5-oxopentan-1-yl)-L-glutamine + phosphate + NADP(+) = [amino-group carrier protein]-C-terminal-N-(1-carboxy-5-phosphooxy-5-oxopentan-1-yl)-L-glutamine + NADPH + H(+). The catalysed reaction is [amino-group carrier protein]-C-terminal-gamma-(L-glutamyl-5-semialdehyde)-L-glutamate + phosphate + NADP(+) = [amino-group carrier protein]-C-terminal-gamma-(5-phospho-L-glutamyl)-L-glutamate + NADPH + H(+). Its pathway is amino-acid biosynthesis; L-lysine biosynthesis via AAA pathway; L-lysine from L-alpha-aminoadipate (Thermus route): step 3/5. The protein operates within amino-acid biosynthesis; L-arginine biosynthesis. Functionally, involved in both the arginine and lysine biosynthetic pathways. In Haloquadratum walsbyi (strain DSM 16790 / HBSQ001), this protein is Putative [LysW]-L-2-aminoadipate/[LysW]-L-glutamate phosphate reductase.